Reading from the N-terminus, the 752-residue chain is MRVDAIAKVTGRARYTDDYVMAGMCYAKYVRSPIAHGYAVSINDEQARSLPGVLAIFTWEDVPDIPFATAGHAWTLDENKRDTADRALLTRHVRHHGDAVAIVVARDELTAEKAAQLVSIEWEELPVITTPEAALAEDAAPIHNGGNLLKQSTMSTGNVQQTIDAADYQVQGHYQTPVIQHCHMESVTSLAWMEDDSRITIVSSTQIPHIVRRVVGQALDIPWSCVRVIKTFVGGGFGNKQDVLEEPMAAFLTSKLGGIPVKVSLSREECFLATRTRHAFTIDGQMGVNRDGTLKGYSLDVLSNTGAYVSHGHSIASAGGNKVAYLYPRCAYAYSSKTCYTNLPSAGAMRGYGAPQVVFAVESMLDDAATALGIDPVEIRLRNASREGDANPLTGKRIYSAGLPECLEKGRKIFEWEKRRAECQNQQGNLRRGVGVACFSYTSNTWPVGVEIAGARLLMNQDGTINVQSGATEIGQGADTVFSQMVAETVGVPVSDVRVISTQDTDVTPFDPGAFASRQSYVAAPALRSAALLLKEKIIAHAAVMLHQSAMNLTLIKGHIVLVERPEEPLMSLKDLAMDAFYHPERGGQLSAESSIKTTTNPPAFGCTFVDLTVDIALCKVTINRILNVHDSGHILNPLLAEGQVHGGMGMGIGWALFEEMIIDAKSGVVRNPNLLDYKMPTMPDLPQLESAFVEINEPQSAYGHKSLGEPPIIPVAAAIRNAVKMATGVAINTLPLTPKRLYEEFHLAGLI.

Mo-molybdopterin contacts are provided by Gln206, Phe237, Arg350, and Ala516.

Belongs to the xanthine dehydrogenase family. Heterotrimer of XdhA, XdhB and XdhC. The cofactor is Mo-molybdopterin.

It catalyses the reaction xanthine + NAD(+) + H2O = urate + NADH + H(+). The catalysed reaction is hypoxanthine + NAD(+) + H2O = xanthine + NADH + H(+). It participates in purine metabolism; hypoxanthine degradation; urate from hypoxanthine: step 1/2. It functions in the pathway purine metabolism; hypoxanthine degradation; urate from hypoxanthine: step 2/2. In terms of biological role, presumed to be a dehydrogenase, but possibly an oxidase. Participates in limited purine salvage (requires aspartate) but does not support aerobic growth on purines as the sole carbon source (purine catabolism). The polypeptide is Xanthine dehydrogenase molybdenum-binding subunit (xdhA) (Escherichia coli O157:H7).